Reading from the N-terminus, the 353-residue chain is Phospho-furanose lactonase (353 aa).

Positions 25, 27, 153, 186, and 214 each coordinate Zn(2+). K153 is subject to N6-carboxylysine. 244–245 (KY) is a substrate binding site. Zn(2+) is bound at residue D272. 275–278 (RILY) contacts substrate.

Belongs to the metallo-dependent hydrolases superfamily. Phosphotriesterase family. Zn(2+) serves as cofactor.

The enzyme catalyses a 1,4-lactone + H2O = a 4-hydroxyacid + H(+). The catalysed reaction is D-xylono-1,4-lactone 5-phosphate + H2O = 5-phospho-D-xylonate + H(+). It catalyses the reaction L-arabino-1,4-lactone 5-phosphate + H2O = 5-phospho-L-arabinonate + H(+). In terms of biological role, catalyzes the hydrolysis of D-xylono-1,4-lactone-5-phosphate and L-arabino-1,4-lactone-5-phosphate. Also able to hydrolyze carboxy 1,4-lactones. This Mycoplasmopsis agalactiae (strain NCTC 10123 / CIP 59.7 / PG2) (Mycoplasma agalactiae) protein is Phospho-furanose lactonase.